We begin with the raw amino-acid sequence, 647 residues long: MIKITFPDGAVREFESGVTTFDIAESISKSLAKKALAGKFNDQLIDTTRAIEEDGSIEIVTPDHKDAYEVLRHSAAHLFAQAAKRLFPNLHLGVGPAIAEGFYYDTDNAEGQISNEDLPRIEAEMQKIVTENYPCIREEVTKEEALELFKDDPYKVELINEHAGAGLTVYRQGEFVDLCRGPHVPSTGRIQVFHLLNVAGAYWRGNSDNNMMQRIYGTAWFDKKDLKAYLTRLEEAKERDHRKLGKELDLFMISQEVGQGLPFWLPDGATIRRTLERYITDKELASGYQHVYTPPLASVELYKTSGHWDHYQEDMFPVMDMGDGEEFVLRPMNCPHHIQVYKNHVRSYRELPIRIAELGMMHRYEKSGALSGLQRVREMTLNDGHIFVTPEQIQEEFQRALQLIIDVYADFNLTDYRFRLSYRDPNDTHKYYDNDEMWENAQSMLKAALDEMGVDYFEAEGEAAFYGPKLDIQVKTALGNEETLSTIQLDFLLPERFDLKYIGADGEEHRPVMIHRGVISTMERFTAILIETYKGAFPTWLAPHQVTVIPISNEAHIDYAWEVAKILRDRGVRADVDDRNEKMQYKIRASQTSKIPYQLIVGDKEMEDKSVNVRRYGSKATHTESVEDFVENILADIARKSRPDAQA.

The TGS domain maps to 1-61 (MIKITFPDGA…EEDGSIEIVT (61 aa)). The catalytic stretch occupies residues 240–538 (DHRKLGKELD…LIETYKGAFP (299 aa)). Zn(2+) contacts are provided by Cys334, His385, and His515.

Belongs to the class-II aminoacyl-tRNA synthetase family. Homodimer. It depends on Zn(2+) as a cofactor.

It is found in the cytoplasm. The enzyme catalyses tRNA(Thr) + L-threonine + ATP = L-threonyl-tRNA(Thr) + AMP + diphosphate + H(+). In terms of biological role, catalyzes the attachment of threonine to tRNA(Thr) in a two-step reaction: L-threonine is first activated by ATP to form Thr-AMP and then transferred to the acceptor end of tRNA(Thr). Also edits incorrectly charged L-seryl-tRNA(Thr). The polypeptide is Threonine--tRNA ligase (Streptococcus pyogenes serotype M49 (strain NZ131)).